Consider the following 477-residue polypeptide: Bifunctional protein HldE (477 aa).

Residues 1–319 form a ribokinase region; sequence MKITLPPFDQ…RALQEQEQSG (319 aa). 195–198 contributes to the ATP binding site; that stretch reads NLAE. Asp-264 is an active-site residue. Positions 344 to 477 are cytidylyltransferase; the sequence is MTNGCFDLLH…IERMQSAPDT (134 aa).

The protein in the N-terminal section; belongs to the carbohydrate kinase PfkB family. This sequence in the C-terminal section; belongs to the cytidylyltransferase family. In terms of assembly, homodimer.

The catalysed reaction is D-glycero-beta-D-manno-heptose 7-phosphate + ATP = D-glycero-beta-D-manno-heptose 1,7-bisphosphate + ADP + H(+). The enzyme catalyses D-glycero-beta-D-manno-heptose 1-phosphate + ATP + H(+) = ADP-D-glycero-beta-D-manno-heptose + diphosphate. It functions in the pathway nucleotide-sugar biosynthesis; ADP-L-glycero-beta-D-manno-heptose biosynthesis; ADP-L-glycero-beta-D-manno-heptose from D-glycero-beta-D-manno-heptose 7-phosphate: step 1/4. The protein operates within nucleotide-sugar biosynthesis; ADP-L-glycero-beta-D-manno-heptose biosynthesis; ADP-L-glycero-beta-D-manno-heptose from D-glycero-beta-D-manno-heptose 7-phosphate: step 3/4. Functionally, catalyzes the phosphorylation of D-glycero-D-manno-heptose 7-phosphate at the C-1 position to selectively form D-glycero-beta-D-manno-heptose-1,7-bisphosphate. In terms of biological role, catalyzes the ADP transfer from ATP to D-glycero-beta-D-manno-heptose 1-phosphate, yielding ADP-D-glycero-beta-D-manno-heptose. This chain is Bifunctional protein HldE, found in Alkalilimnicola ehrlichii (strain ATCC BAA-1101 / DSM 17681 / MLHE-1).